Consider the following 441-residue polypeptide: Damage-control phosphatase ARMT1 (441 aa).

At alanine 2 the chain carries N-acetylalanine. N6-acetyllysine is present on lysine 40. The residue at position 102 (serine 102) is a Phosphoserine. Positions 253 and 254 each coordinate Mn(2+). A substrate-binding site is contributed by 253–254 (DN). The S-adenosyl-L-methionine site is built by glutamate 258 and aspartate 291. A Mn(2+)-binding site is contributed by aspartate 291. Residues 367–371 (DLNYR) and lysine 404 each bind substrate. The Subfamily III RTxK motif signature appears at 401–404 (RTLK).

Belongs to the damage-control phosphatase family. Sugar phosphate phosphatase III subfamily. The cofactor is Mn(2+). Ni(2+) is required as a cofactor. Automethylated.

The catalysed reaction is beta-D-fructose 1-phosphate + H2O = D-fructose + phosphate. The enzyme catalyses beta-D-fructose 6-phosphate = dihydroxyacetone + D-glyceraldehyde 3-phosphate. It carries out the reaction L-glutamyl-[protein] + S-adenosyl-L-methionine = [protein]-L-glutamate 5-O-methyl ester + S-adenosyl-L-homocysteine. In terms of biological role, metal-dependent phosphatase that shows phosphatase activity against several substrates, including fructose-1-phosphate and fructose-6-phosphate. Its preference for fructose-1-phosphate, a strong glycating agent that causes DNA damage rather than a canonical yeast metabolite, suggests a damage-control function in hexose phosphate metabolism. Has also been shown to have O-methyltransferase activity that methylates glutamate residues of target proteins to form gamma-glutamyl methyl ester residues. Possibly methylates PCNA, suggesting it is involved in the DNA damage response. This is Damage-control phosphatase ARMT1 from Homo sapiens (Human).